A 195-amino-acid polypeptide reads, in one-letter code: Small ribosomal subunit protein uS4c (195 aa).

Residues 82-143 (MRLDNILFRL…KQRSKALIQN (62 aa)) enclose the S4 RNA-binding domain.

It belongs to the universal ribosomal protein uS4 family. In terms of assembly, part of the 30S ribosomal subunit. Contacts protein S5. The interaction surface between S4 and S5 is involved in control of translational fidelity.

It localises to the plastid. It is found in the chloroplast. Its function is as follows. One of the primary rRNA binding proteins, it binds directly to 16S rRNA where it nucleates assembly of the body of the 30S subunit. Functionally, with S5 and S12 plays an important role in translational accuracy. The polypeptide is Small ribosomal subunit protein uS4c (rps4) (Pillansia templemannii).